The primary structure comprises 438 residues: UDP-N-acetylmuramoylalanine--D-glutamate ligase (438 aa).

112 to 118 (GSNGKST) is a binding site for ATP.

This sequence belongs to the MurCDEF family.

Its subcellular location is the cytoplasm. The catalysed reaction is UDP-N-acetyl-alpha-D-muramoyl-L-alanine + D-glutamate + ATP = UDP-N-acetyl-alpha-D-muramoyl-L-alanyl-D-glutamate + ADP + phosphate + H(+). It participates in cell wall biogenesis; peptidoglycan biosynthesis. In terms of biological role, cell wall formation. Catalyzes the addition of glutamate to the nucleotide precursor UDP-N-acetylmuramoyl-L-alanine (UMA). The chain is UDP-N-acetylmuramoylalanine--D-glutamate ligase from Shigella dysenteriae serotype 1 (strain Sd197).